The sequence spans 325 residues: Cytochrome f (325 aa).

The N-terminal stretch at 1–40 (MKTPELMAIWQRLKTACLVAIATFGLFFASDVLFPQAAAA) is a signal peptide. 4 residues coordinate heme: Tyr41, Cys62, Cys65, and His66. Residues 290–309 (IYGYMAFVAGIMLTQIFLVL) traverse the membrane as a helical segment.

It belongs to the cytochrome f family. The 4 large subunits of the cytochrome b6-f complex are cytochrome b6, subunit IV (17 kDa polypeptide, PetD), cytochrome f and the Rieske protein, while the 4 small subunits are PetG, PetL, PetM and PetN. The complex functions as a dimer. Heme serves as cofactor.

Its subcellular location is the cellular thylakoid membrane. Functionally, component of the cytochrome b6-f complex, which mediates electron transfer between photosystem II (PSII) and photosystem I (PSI), cyclic electron flow around PSI, and state transitions. The protein is Cytochrome f (petA) of Picosynechococcus sp. (strain ATCC 27264 / PCC 7002 / PR-6) (Agmenellum quadruplicatum).